A 366-amino-acid polypeptide reads, in one-letter code: sn-glycerol-3-phosphate import ATP-binding protein UgpC (366 aa).

The ABC transporter domain occupies 4-235; the sequence is LSLRNVQKTY…PASTFVAGFI (232 aa). 37 to 44 contacts ATP; the sequence is GPSGCGKS.

It belongs to the ABC transporter superfamily. sn-glycerol-3-phosphate importer (TC 3.A.1.1.3) family. As to quaternary structure, the complex is composed of two ATP-binding proteins (UgpC), two transmembrane proteins (UgpA and UgpE) and a solute-binding protein (UgpB).

The protein localises to the cell inner membrane. It catalyses the reaction sn-glycerol 3-phosphate(out) + ATP + H2O = sn-glycerol 3-phosphate(in) + ADP + phosphate + H(+). Part of the ABC transporter complex UgpBAEC involved in sn-glycerol-3-phosphate (G3P) import. Responsible for energy coupling to the transport system. This chain is sn-glycerol-3-phosphate import ATP-binding protein UgpC, found in Cupriavidus necator (strain ATCC 17699 / DSM 428 / KCTC 22496 / NCIMB 10442 / H16 / Stanier 337) (Ralstonia eutropha).